Reading from the N-terminus, the 523-residue chain is 2-isopropylmalate synthase (523 aa).

In terms of domain architecture, Pyruvate carboxyltransferase spans 5–267; sequence VVIFDTTLRD…QTRINHNEIW (263 aa). Residues Asp14, His202, His204, and Asn238 each contribute to the Mn(2+) site. A regulatory domain region spans residues 392-523; that stretch reads RMDYFSVQSG…QNKENNKETV (132 aa).

This sequence belongs to the alpha-IPM synthase/homocitrate synthase family. LeuA type 1 subfamily. In terms of assembly, homodimer. It depends on Mn(2+) as a cofactor.

The protein resides in the cytoplasm. It carries out the reaction 3-methyl-2-oxobutanoate + acetyl-CoA + H2O = (2S)-2-isopropylmalate + CoA + H(+). It participates in amino-acid biosynthesis; L-leucine biosynthesis; L-leucine from 3-methyl-2-oxobutanoate: step 1/4. Catalyzes the condensation of the acetyl group of acetyl-CoA with 3-methyl-2-oxobutanoate (2-ketoisovalerate) to form 3-carboxy-3-hydroxy-4-methylpentanoate (2-isopropylmalate). This Enterobacter sp. (strain 638) protein is 2-isopropylmalate synthase.